The following is a 537-amino-acid chain: Zinc metalloproteinase nas-23 (537 aa).

The signal sequence occupies residues 1 to 16; it reads MRFLILVLAGSIGIYG. Positions 17 to 111 are excised as a propeptide; it reads VNLPKIPKLS…EQLDHSRTKR (95 aa). N77 carries an N-linked (GlcNAc...) asparagine glycan. The 196-residue stretch at 116–311 folds into the Peptidase M12A domain; the sequence is NAMYPKTIWL…AKINRHYNCE (196 aa). Cystine bridges form between C156–C310, C178–C199, C314–C334, C336–C345, C356–C385, and C412–C433. H207 provides a ligand contact to Zn(2+). Residue E208 is part of the active site. Zn(2+) is bound by residues H211 and H217. Positions 306–346 constitute an EGF-like domain; the sequence is RHYNCEKNCKNKITCLNGGYQHPKNCKICVCPPGYGGSDCK. The CUB domain occupies 356-471; the sequence is CTGVLVAGET…VQLRYSTVDG (116 aa). N-linked (GlcNAc...) asparagine glycosylation occurs at N481.

The cofactor is Zn(2+). Expressed in the hypodermis, rectum and to a lesser extent in pharyngeal muscles and intestine.

It is found in the secreted. Metalloprotease. The protein is Zinc metalloproteinase nas-23 (nas-23) of Caenorhabditis elegans.